A 259-amino-acid chain; its full sequence is ATP synthase subunit a (259 aa).

5 helical membrane-spanning segments follow: residues 29–49, 89–109, 132–154, 209–229, and 230–250; these read TVNI…IWLF, LIAP…AMDL, SADV…FYSI, IFIL…NVPW, and AIFH…LTIV.

Belongs to the ATPase A chain family. In terms of assembly, F-type ATPases have 2 components, CF(1) - the catalytic core - and CF(0) - the membrane proton channel. CF(1) has five subunits: alpha(3), beta(3), gamma(1), delta(1), epsilon(1). CF(0) has three main subunits: a(1), b(2) and c(9-12). The alpha and beta chains form an alternating ring which encloses part of the gamma chain. CF(1) is attached to CF(0) by a central stalk formed by the gamma and epsilon chains, while a peripheral stalk is formed by the delta and b chains.

The protein resides in the cell inner membrane. Key component of the proton channel; it plays a direct role in the translocation of protons across the membrane. The polypeptide is ATP synthase subunit a (Tolumonas auensis (strain DSM 9187 / NBRC 110442 / TA 4)).